Reading from the N-terminus, the 170-residue chain is Protein SprT (170 aa).

Residues 23–164 (QLARQHFSVE…CRQCGDKLKF (142 aa)) enclose the SprT-like domain. His78 is a Zn(2+) binding site. The active site involves Glu79. Position 82 (His82) interacts with Zn(2+).

The protein belongs to the SprT family. Zn(2+) serves as cofactor.

The protein localises to the cytoplasm. In Serratia proteamaculans (strain 568), this protein is Protein SprT.